The sequence spans 527 residues: MEYGTRKLSDVYEVSEILGRGGFSVVRKGTRKSNNDDEKSQSQSKSQSQSQVAIKTLRRLGTSNNLPRKKDGGENSTETMMKFPTMRQVSVSDALLTNEILVMRRIVENVSPHPNVIDLYDVYEDTNGVHLVLELCSGGELFDRIVAQDKYSETEASTVVHQIVAGLEAIHRANIIHRDLKPENCLFLDVGKDSSLKIMDFGLSSVEEFTDPVVGLFGSIDYVSPEALSQGKITTKSDMWSLGVILYILLSGYPPFIAQNNRQKQQMILNGNFSFYEKTWKGISQSAKNLISSLLTVDPAKRPSAQELLSDPWVKGEKAKDDQMDPEIVSRLQRFNARRKLRAAAIASVWSSTIFLRTKKLKSLVGSYDLKEDEIENLRMHFKKICADRDNATLCEFEEVLKAMKMPSLIPFAARIFDLFDNNRDGTVDMREILCGFSSLKNSKGEDALRLCFQMYDTDRSGCITKEEVASMLRALPYDCLPTDITEPGKLDEIFDLMDANSDGKVTFDEFKAAMQRDSSLQDVVLS.

The Protein kinase domain maps to Tyr12 to Val314. Leu18–Val26 provides a ligand contact to ATP. Residues Val25 to Gln51 are disordered. The segment covering Gln41–Gln51 has biased composition (low complexity). Lys55 contacts ATP. The disordered stretch occupies residues Arg59–Glu78. Asp179 acts as the Proton acceptor in catalysis. Residues Met239 to Pro255 traverse the membrane as a helical segment. Position 279 is a phosphothreonine (Thr279). Residues Ala337–Trp350 form a calmodulin-binding region. Residues Thr358 to Arg379 adopt a coiled-coil conformation. EF-hand domains lie at Ser408–Ser443, Lys444–Asp479, and Thr486–Leu521. Ca(2+) is bound by residues Asp421, Asn423, Asp425, Thr427, Glu432, Asp457, Asp459, Ser461, Cys463, Glu468, Asp499, Asn501, Asp503, Lys505, and Glu510.

Belongs to the protein kinase superfamily. CAMK Ser/Thr protein kinase family. CaMK subfamily. In terms of processing, autophosphorylation.

The protein resides in the membrane. It carries out the reaction L-seryl-[protein] + ATP = O-phospho-L-seryl-[protein] + ADP + H(+). The enzyme catalyses L-threonyl-[protein] + ATP = O-phospho-L-threonyl-[protein] + ADP + H(+). Its activity is regulated as follows. Activated by calcium. Autophosphorylation may play an important role in the regulation of the kinase activity. Functionally, protein kinase that recognizes the calcium spiking induced by Nod factors and translates this signal to components controlling nodulation and mycorrhizal infection responses. This Pisum sativum (Garden pea) protein is Calcium and calcium/calmodulin-dependent serine/threonine-protein kinase (SYM9).